We begin with the raw amino-acid sequence, 240 residues long: Uridylate kinase (240 aa).

ATP is bound at residue 12-15 (KLSG). Positions 20 to 25 (GEQGNG) are involved in allosteric activation by GTP. Gly54 is a binding site for UMP. Residues Gly55 and Arg59 each contribute to the ATP site. UMP-binding positions include Asp74 and 135 to 142 (TGNPYFST). Residues Asn163, Tyr169, and Asp172 each contribute to the ATP site.

This sequence belongs to the UMP kinase family. Homohexamer.

The protein localises to the cytoplasm. It catalyses the reaction UMP + ATP = UDP + ADP. It functions in the pathway pyrimidine metabolism; CTP biosynthesis via de novo pathway; UDP from UMP (UMPK route): step 1/1. With respect to regulation, allosterically activated by GTP. Inhibited by UTP. In terms of biological role, catalyzes the reversible phosphorylation of UMP to UDP. The protein is Uridylate kinase of Bacillus licheniformis (strain ATCC 14580 / DSM 13 / JCM 2505 / CCUG 7422 / NBRC 12200 / NCIMB 9375 / NCTC 10341 / NRRL NRS-1264 / Gibson 46).